The sequence spans 475 residues: Ribulose bisphosphate carboxylase large chain (475 aa).

Residues 1-2 (MS) constitute a propeptide that is removed on maturation. The residue at position 3 (Pro3) is an N-acetylproline. Lys14 carries the post-translational modification N6,N6,N6-trimethyllysine. The substrate site is built by Asn123 and Thr173. Residue Lys175 is the Proton acceptor of the active site. Position 177 (Lys177) interacts with substrate. 3 residues coordinate Mg(2+): Lys201, Asp203, and Glu204. Lys201 is modified (N6-carboxylysine). His294 acts as the Proton acceptor in catalysis. Substrate contacts are provided by Arg295, His327, and Ser379.

The protein belongs to the RuBisCO large chain family. Type I subfamily. As to quaternary structure, heterohexadecamer of 8 large chains and 8 small chains; disulfide-linked. The disulfide link is formed within the large subunit homodimers. The cofactor is Mg(2+). The disulfide bond which can form in the large chain dimeric partners within the hexadecamer appears to be associated with oxidative stress and protein turnover.

Its subcellular location is the plastid. It localises to the chloroplast. The enzyme catalyses 2 (2R)-3-phosphoglycerate + 2 H(+) = D-ribulose 1,5-bisphosphate + CO2 + H2O. It carries out the reaction D-ribulose 1,5-bisphosphate + O2 = 2-phosphoglycolate + (2R)-3-phosphoglycerate + 2 H(+). Its function is as follows. RuBisCO catalyzes two reactions: the carboxylation of D-ribulose 1,5-bisphosphate, the primary event in carbon dioxide fixation, as well as the oxidative fragmentation of the pentose substrate in the photorespiration process. Both reactions occur simultaneously and in competition at the same active site. This is Ribulose bisphosphate carboxylase large chain from Alnus incana (White alder).